We begin with the raw amino-acid sequence, 438 residues long: Ribosomal protein uS12 methylthiotransferase RimO (438 aa).

An MTTase N-terminal domain is found at 4-114 (PRVSFVSLGC…VMNAVHEVAP (111 aa)). 6 residues coordinate [4Fe-4S] cluster: C13, C49, C78, C146, C150, and C153. In terms of domain architecture, Radical SAM core spans 132 to 370 (LTPRHYAYLK…MAKQQQISTN (239 aa)). The 66-residue stretch at 373 to 438 (KKKVGKRLPV…DAYDLHGTAV (66 aa)) folds into the TRAM domain.

The protein belongs to the methylthiotransferase family. RimO subfamily. Requires [4Fe-4S] cluster as cofactor.

Its subcellular location is the cytoplasm. It carries out the reaction L-aspartate(89)-[ribosomal protein uS12]-hydrogen + (sulfur carrier)-SH + AH2 + 2 S-adenosyl-L-methionine = 3-methylsulfanyl-L-aspartate(89)-[ribosomal protein uS12]-hydrogen + (sulfur carrier)-H + 5'-deoxyadenosine + L-methionine + A + S-adenosyl-L-homocysteine + 2 H(+). In terms of biological role, catalyzes the methylthiolation of an aspartic acid residue of ribosomal protein uS12. This chain is Ribosomal protein uS12 methylthiotransferase RimO, found in Brucella ovis (strain ATCC 25840 / 63/290 / NCTC 10512).